A 195-amino-acid chain; its full sequence is MRRATITRKTAETDISVEIDLDGTGVYDNRTGVGFFDHMLDQLSRHALIDMTVRCDGDLHIDDHHTVEDVGIALGQALAEAVGDKRGIVRYGSCLLPMDDALVRAALDISGRPYLVWDVALPTAKIGTFDTELVREFFQALATHGGLTLHVTRLAGINSHHIAEAAFKSVARALRAALETDPRKANAIPSTKGSL.

It belongs to the imidazoleglycerol-phosphate dehydratase family.

The protein localises to the cytoplasm. The catalysed reaction is D-erythro-1-(imidazol-4-yl)glycerol 3-phosphate = 3-(imidazol-4-yl)-2-oxopropyl phosphate + H2O. The protein operates within amino-acid biosynthesis; L-histidine biosynthesis; L-histidine from 5-phospho-alpha-D-ribose 1-diphosphate: step 6/9. This Dinoroseobacter shibae (strain DSM 16493 / NCIMB 14021 / DFL 12) protein is Imidazoleglycerol-phosphate dehydratase.